Here is a 340-residue protein sequence, read N- to C-terminus: MVEQIKDKLGRPIRDLRLSVTDRCNFRCDYCMPKEVFGDDFVFLPKNELLTFDEMARIAKVYAELGVKKIRITGGEPLMRRDLDVLIAKLNQIDGIEDIGLTTNGLLLKKHGQKLYDAGLRRINVSLDAIDDTLFQSINNCNIKATTILEQIDYATSIGLNVKVNVVIQKGINDDQIIPMLEYFKDKHIEIRFIEFMDVGNDNGWDFSKVVTKDDMLTMIEQHFEIDPVEPKYFGEVAKYYRHKDNGVQFGLITSVSQSFCSTCTRARLSSDGKFYGCLFATVDGFNVKAFIRSGVTDEELKEQFKALWQIRDDRYSDERTAQTVANRQRKKINMNYIGG.

The region spanning 8 to 230 is the Radical SAM core domain; sequence KLGRPIRDLR…EQHFEIDPVE (223 aa). Arg-17 serves as a coordination point for GTP. Cys-24 and Cys-28 together coordinate [4Fe-4S] cluster. Tyr-30 lines the S-adenosyl-L-methionine pocket. Cys-31 is a binding site for [4Fe-4S] cluster. Arg-71 contacts GTP. S-adenosyl-L-methionine is bound at residue Gly-75. Residue Thr-102 participates in GTP binding. S-adenosyl-L-methionine is bound at residue Ser-126. Position 163 (Lys-163) interacts with GTP. Met-197 provides a ligand contact to S-adenosyl-L-methionine. Residues Cys-261 and Cys-264 each contribute to the [4Fe-4S] cluster site. 266–268 provides a ligand contact to GTP; it reads RAR. Cys-278 is a [4Fe-4S] cluster binding site.

It belongs to the radical SAM superfamily. MoaA family. Monomer and homodimer. [4Fe-4S] cluster is required as a cofactor.

It catalyses the reaction GTP + AH2 + S-adenosyl-L-methionine = (8S)-3',8-cyclo-7,8-dihydroguanosine 5'-triphosphate + 5'-deoxyadenosine + L-methionine + A + H(+). It participates in cofactor biosynthesis; molybdopterin biosynthesis. Functionally, catalyzes the cyclization of GTP to (8S)-3',8-cyclo-7,8-dihydroguanosine 5'-triphosphate. This Staphylococcus aureus (strain bovine RF122 / ET3-1) protein is GTP 3',8-cyclase.